A 166-amino-acid chain; its full sequence is Large ribosomal subunit protein uL10 (166 aa).

This sequence belongs to the universal ribosomal protein uL10 family. In terms of assembly, part of the ribosomal stalk of the 50S ribosomal subunit. The N-terminus interacts with L11 and the large rRNA to form the base of the stalk. The C-terminus forms an elongated spine to which L12 dimers bind in a sequential fashion forming a multimeric L10(L12)X complex.

Its function is as follows. Forms part of the ribosomal stalk, playing a central role in the interaction of the ribosome with GTP-bound translation factors. The polypeptide is Large ribosomal subunit protein uL10 (Bacillus licheniformis (strain ATCC 14580 / DSM 13 / JCM 2505 / CCUG 7422 / NBRC 12200 / NCIMB 9375 / NCTC 10341 / NRRL NRS-1264 / Gibson 46)).